The sequence spans 146 residues: uncharacterized protein (146 aa).

This is an uncharacterized protein from Orgyia pseudotsugata multicapsid polyhedrosis virus (OpMNPV).